The chain runs to 556 residues: Vacuolar protein 8 (556 aa).

Glycine 2 carries the N-myristoyl glycine lipid modification. S-palmitoyl cysteine attachment occurs at residues cysteine 4, cysteine 5, and cysteine 7. ARM repeat units follow at residues 38–74 (NRSEVDFFTDGPLRALSTLVYSENIDLQRSAALAFAE), 75–115 (VTEK…NLAV), 117–156 (DSNKVLIVNMGGLEPLIRQMMSPNIEVQCNAVGCITNLAT), 158–197 (DQNKSKIATSGALIPLTKLAKSKDLRVQRNATGALLNMTH), 199–238 (LENRQELVNAGSVPILVQLLSSTDPDVQYYCTTALSNIAV), 242–281 (NRKKLASTEPKLISQLVQLMDSTSPRVQCQATLALRNLAS), 283–322 (ANYQLEIVRAGGLPNLVTLLNSTHQPLVLAAVACIRNISI), 324–364 (PLNE…NLAA), and 408–447 (DDLKMKLLDSNIIEVLLPLTSSENGEVCGNAAAALANLCS).

Belongs to the beta-catenin family.

Its subcellular location is the vacuole membrane. Functionally, functions in both vacuole inheritance and protein targeting from the cytoplasm to vacuole. This is Vacuolar protein 8 (VAC8) from Komagataella pastoris (Yeast).